The following is a 186-amino-acid chain: Adrenodoxin, mitochondrial (186 aa).

The transit peptide at 1 to 58 (MAARLLRVASAALGDTAGRWRLLARPRAGAGGLRGSRGPGLGGGAVATRTLSVSGRAQ) directs the protein to the mitochondrion. Ser-61 carries the phosphoserine modification. The residue at position 64 (Lys-64) is an N6-acetyllysine; alternate. An N6-succinyllysine; alternate modification is found at Lys-64. Residues 65–169 (ITVHFINRDG…NMTVRVPDAV (105 aa)) enclose the 2Fe-2S ferredoxin-type domain. [2Fe-2S] cluster contacts are provided by Cys-104, Cys-110, Cys-113, and Cys-150. An N6-succinyllysine modification is found at Lys-156. The residue at position 175 (Ser-175) is a Phosphoserine.

It belongs to the adrenodoxin/putidaredoxin family. In terms of assembly, interacts with CYP11A1. It depends on [2Fe-2S] cluster as a cofactor. As to expression, detected in adrenal cortex and corpus luteum (at protein level).

It is found in the mitochondrion matrix. Functionally, essential for the synthesis of various steroid hormones. Participates in the reduction of mitochondrial cytochrome P450 for steroidogenesis. Transfers electrons from adrenodoxin reductase to CYP11A1, a cytochrome P450 that catalyzes cholesterol side-chain cleavage to produce pregnenolone, the precursor of most steroid hormones. Does not form a ternary complex with adrenodoxin reductase and CYP11A1 but shuttles between the two enzymes to transfer electrons. The protein is Adrenodoxin, mitochondrial (FDX1) of Bos taurus (Bovine).